We begin with the raw amino-acid sequence, 129 residues long: uncharacterized protein (129 aa).

Positions 44–63 are disordered; it reads PYRAADRSNDQDNDRSGGNV. The span at 46–58 shows a compositional bias: basic and acidic residues; the sequence is RAADRSNDQDNDR. 2 consecutive transmembrane segments (helical) span residues 78–98 and 109–129; these read IISL…VGYI and AWAM…IPFF.

The protein localises to the cell membrane. This is an uncharacterized protein from Bacillus subtilis (strain 168).